Reading from the N-terminus, the 202-residue chain is Arenicin-1 (202 aa).

The first 25 residues, 1–25 (MTSTQSVAVCATLILAIFCVNDIHC), serve as a signal peptide directing secretion. Residues 26-181 (DPIAEARAAA…SGDNNEPEKR (156 aa)) constitute a propeptide that is removed on maturation. The 96-residue stretch at 73 to 168 (GDGVEGSVMV…ACQGKSVYWL (96 aa)) folds into the BRICHOS domain. 2 disulfides stabilise this stretch: C100-C160 and C184-C201.

Functionally, has antimicrobial activity against the Gram-negative bacteria E.coli and P.mirabilis, the Gram-positive bacterium L.monocytogenes and the yeast C.albicans. In Arenicola marina (Lugworm), this protein is Arenicin-1.